A 1034-amino-acid chain; its full sequence is MSSNTVAQFATELKMPANVLLEQLRAAGVDLKSVDDSVTDSDKAKLLDSLRRAHGATDGKKITLTRRQTSEIRQADATGRSRTIQVEVRKKRVFVKRDPAELAAEAAAEAKAAAEQAAAEAVDMQPESVEAQAPAPQSVEALAQAPVEAVKPVEAEAPKIETPPVETPAVEAVEAAAPKIEASEAPAEPVQTQTAQAVEETPAPAETPEPVPAVKAEAEPQSAQPAASREQSTAQPVEPEAKKESVAAPKTQEAGPESVVHAQTDLNSKTPAPVAKSETAPSAPKAAQGRPQVAEAARPPVVNDRAREDARRAAEAEAAALREMLNRPRKVLRAPEPEPAGTNNAALSGTLHKPAGKKDAAAAPAAAPKKEGGNKPAAAGAGGKKVIKTAEVSSTWNDDASRKKPADKAAAPGGNSRDGWRSGGKGGGKNSRNGRNQHQDRRNESAAQEFIAREIHVPETISVADLAHKMSVKAAEVIKQLMKLGQMVTINQVLDQETAMIVVEELGHVAIAAKLDDPEAFLDETPGVSEAEALPRAPVVTVMGHVDHGKTSLLDYIRRAKVAAGEAGGITQHIGAYHVETDRGSVTFLDTPGHEAFTAMRARGAKATDIVILVVAADDGVMPQTREAIHHAKAAGVPLVVAVNKIDKPEANPDRVKQELVAEQVVPEEYGGDVPFVPVSAKTGAGIDDLLENVLLQAEILELTAPVEAAAKGIVIEARLDKGRGPVATILVQSGTLKRGDVVLAGASFGRVRAMLDENGKQVQSAGPSIPVEIQGLTEVPAAGDELISLSDERRAREIALFRQGKFRDVKLARQQAAKLESMFDNMGEGTQTLPLIVKTDVQGSQEALVAALTKLSTDEVRVQVVHAAVGGISESDVNLAIASNAVVIGFNVRADQSAKKLADNNGIDLRYYNIIYDAVDEVKAAMSGMLAPEKREEIIGLVEVREVYTISRIGTVAGCMVLDGLVRRDSQVRLLRNNVVTWTGQLDSLRRFKDDVKEVKSGFDCGLTLRGNNDLQMGDQLEVFEIKEIARTL.

2 disordered regions span residues A118–E140 and E154–A446. Composition is skewed to low complexity over residues T162–P178 and P212–S228. Basic and acidic residues predominate over residues D304–E315. The 168-residue stretch at P535 to E702 folds into the tr-type G domain. The interval G544–T551 is G1. GTP is bound at residue G544 to T551. Residues G569–H573 form a G2 region. The segment at D590–G593 is G3. Residues D590–H594 and N644–D647 each bind GTP. Residues N644–D647 are G4. Residues S680–K682 form a G5 region.

It belongs to the TRAFAC class translation factor GTPase superfamily. Classic translation factor GTPase family. IF-2 subfamily.

The protein resides in the cytoplasm. Functionally, one of the essential components for the initiation of protein synthesis. Protects formylmethionyl-tRNA from spontaneous hydrolysis and promotes its binding to the 30S ribosomal subunits. Also involved in the hydrolysis of GTP during the formation of the 70S ribosomal complex. The polypeptide is Translation initiation factor IF-2 (Bordetella avium (strain 197N)).